A 451-amino-acid chain; its full sequence is Gamma-aminobutyric acid receptor subunit alpha-2 (451 aa).

The signal sequence occupies residues 1–28; it reads MKTKLSTCNVWSLLLVLLVWDPVRLVLA. Over 29 to 249 the chain is Extracellular; the sequence is NIQEDEAKNN…MTAHFHLKRK (221 aa). N-linked (GlcNAc...) asparagine glycosylation occurs at N38. R94 contacts 4-aminobutanoate. N-linked (GlcNAc...) asparagine glycosylation occurs at N138. Position 157 (T157) interacts with 4-aminobutanoate. C166 and C180 are joined by a disulfide. Residues 250 to 270 form a helical membrane-spanning segment; it reads IGYFVIQTYLPCIMTVILSQV. At 271-280 the chain is on the cytoplasmic side; the sequence is SFWLNRESVP. The chain crosses the membrane as a helical span at residues 281 to 300; it reads ARTVFGVTTVLTMTTLSISA. Residues 301–311 are Extracellular-facing; the sequence is RNSLPKVAYAT. Residues 312–332 form a helical membrane-spanning segment; that stretch reads AMDWFIAVCYAFVFSALIEFA. The Cytoplasmic portion of the chain corresponds to 333-420; the sequence is TVNYFTKRGW…FNSVSKIDRM (88 aa). Positions 389–408 are disordered; sequence KSATTPEPNKKPENKPAEAK. Basic and acidic residues predominate over residues 396–408; it reads PNKKPENKPAEAK. Residues 421 to 441 traverse the membrane as a helical segment; sequence SRIVFPVLFGTFNLVYWATYL. Over 442–451 the chain is Extracellular; the sequence is NREPVLGVSP.

Belongs to the ligand-gated ion channel (TC 1.A.9) family. Gamma-aminobutyric acid receptor (TC 1.A.9.5) subfamily. GABRA2 sub-subfamily. As to quaternary structure, heteropentamer, formed by a combination of alpha (GABRA1-6), beta (GABRB1-3), gamma (GABRG1-3), delta (GABRD), epsilon (GABRE), rho (GABRR1-3), pi (GABRP) and theta (GABRQ) subunits, each subunit exhibiting distinct physiological and pharmacological properties. Interacts with UBQLN1. Interacts with KIF21B. Interacts with LHFPL4. Interacts with SHISA7; interaction leads to the regulation of GABA(A) receptor trafficking, channel deactivation kinetics and pharmacology. Post-translationally, glycosylated.

It localises to the postsynaptic cell membrane. The protein resides in the cell membrane. The protein localises to the cytoplasmic vesicle membrane. Its subcellular location is the cell projection. It is found in the dendrite. It catalyses the reaction chloride(in) = chloride(out). Activated by pentobarbital. Inhibited by the antagonist bicuculline. Its function is as follows. Alpha subunit of the heteropentameric ligand-gated chloride channel gated by gamma-aminobutyric acid (GABA), a major inhibitory neurotransmitter in the brain. GABA-gated chloride channels, also named GABA(A) receptors (GABAAR), consist of five subunits arranged around a central pore and contain GABA active binding site(s) located at the alpha and beta subunit interface(s). When activated by GABA, GABAARs selectively allow the flow of chloride anions across the cell membrane down their electrochemical gradient. Chloride influx into the postsynaptic neuron following GABAAR opening decreases the neuron ability to generate a new action potential, thereby reducing nerve transmission. The alpha-2 subunit exhibits synaptogenic activity together with beta-2 and very little to no activity together with beta-3, the gamma-2 subunit being necessary but not sufficient to induce rapid synaptic contacts formation. The polypeptide is Gamma-aminobutyric acid receptor subunit alpha-2 (Mus musculus (Mouse)).